The following is a 556-amino-acid chain: Glypican-4 (556 aa).

The first 18 residues, 1–18 (MARFGLPALLCTLAVLSA), serve as a signal peptide directing secretion. S357 carries the post-translational modification Phosphoserine. O-linked (Xyl...) (glycosaminoglycan) serine glycosylation is found at S494, S498, and S500. An N-linked (GlcNAc...) asparagine glycan is attached at N514. The GPI-anchor amidated serine moiety is linked to residue S529. Positions 530–556 (AGVRPGAQAYLLTVFCILFLVMQREWR) are cleaved as a propeptide — removed in mature form.

This sequence belongs to the glypican family.

It localises to the cell membrane. Its subcellular location is the secreted. It is found in the extracellular space. Its function is as follows. Cell surface proteoglycan that bears heparan sulfate. May be involved in the development of kidney tubules and of the central nervous system. This is Glypican-4 (GPC4) from Homo sapiens (Human).